We begin with the raw amino-acid sequence, 115 residues long: Pro-neuregulin-4, membrane-bound isoform (115 aa).

Residues 1-62 (MPTDHEEPCG…SSIQTKSNLF (62 aa)) lie on the Extracellular side of the membrane. Residues 5–46 (HEEPCGPSHKSFCLNGGLCYVIPTIPSPFCRCVENYTGARCE) form the EGF-like domain. 3 cysteine pairs are disulfide-bonded: C9/C23, C17/C34, and C36/C45. An N-linked (GlcNAc...) asparagine glycan is attached at N39. The chain crosses the membrane as a helical span at residues 63–83 (EAFVALAVLVTLIIGAFYFLC). Residues 84-115 (RKGHFQRASSVQYDINLVETSSTSAHHSHEQH) are Cytoplasmic-facing.

The protein belongs to the neuregulin family. In terms of assembly, interacts with ERBB4. Post-translationally, proteolytic cleavage close to the plasma membrane on the external face leads to the release of the soluble growth factor form. Extensive glycosylation precedes the proteolytic cleavage.

Its subcellular location is the cell membrane. It localises to the secreted. In terms of biological role, low affinity ligand for the ERBB4 tyrosine kinase receptor. Concomitantly recruits ERBB1 and ERBB2 coreceptors, resulting in ligand-stimulated tyrosine phosphorylation and activation of the ERBB receptors. Does not bind to the ERBB1, ERBB2 and ERBB3 receptors. The protein is Pro-neuregulin-4, membrane-bound isoform (NRG4) of Homo sapiens (Human).